A 128-amino-acid chain; its full sequence is MAYVKERIYESMFIIAPNVPEEEREKLVERVKGIIEERVKGKIDKVERMGMRKFAYEIKKFSEGDYTVIYFRCDGQHLQELENFYRITPEIIRWQTFRRFDLEKKERKAQREKAAAEAIESSEGGSEA.

It belongs to the bacterial ribosomal protein bS6 family.

In terms of biological role, binds together with bS18 to 16S ribosomal RNA. The protein is Small ribosomal subunit protein bS6 of Thermotoga sp. (strain RQ2).